We begin with the raw amino-acid sequence, 418 residues long: Endoglucanase EG-II (418 aa).

Positions 1–21 (MNKSVAPLLLAASILYGGAVA) are cleaved as a signal peptide. Q22 carries the post-translational modification Pyrrolidone carboxylic acid. The 36-residue stretch at 22-57 (QQTVWGQCGGIGWSGPTNCAPGSACSTLNPYYAQCI) folds into the CBM1 domain. The interval 58-91 (PGATTITTSTRPPSGPTTTTRATSTSSSTPPTSS) is linker. Residues 63-91 (ITTSTRPPSGPTTTTRATSTSSSTPPTSS) are disordered. The tract at residues 92–418 (GVRFAGVNIA…SLVSSCLARK (327 aa)) is catalytic. A disulfide bridge links C107 with C113. An N-linked (GlcNAc) asparagine glycan is attached at N124. C183 and C190 are oxidised to a cystine. E239 serves as the catalytic Proton donor/acceptor. 2 disulfides stabilise this stretch: C323/C359 and C364/C414. The Nucleophile role is filled by E350.

This sequence belongs to the glycosyl hydrolase 5 (cellulase A) family.

The protein localises to the secreted. The enzyme catalyses Endohydrolysis of (1-&gt;4)-beta-D-glucosidic linkages in cellulose, lichenin and cereal beta-D-glucans.. Endoglucanase (EG) that cleaves the internal beta-1,4-glucosidic bonds in cellulose. The degradation of cellulose involves an interplay between different cellulolytic enzymes. Hydrolysis starts with EGs, which cut internal glycosidic linkages to reduce the polymerization degree of the substrate and creates new chain ends for exocellobiohydrolases (CBHs). The CBH release the disaccharide cellobiose from the non-reducing end of the cellulose polymer chain. Finally, beta-1,4-glucosidases hydrolyze the cellobiose and other short cello-oligosaccharides into glucose units. This chain is Endoglucanase EG-II (egl2), found in Hypocrea jecorina (Trichoderma reesei).